Reading from the N-terminus, the 113-residue chain is Protein CTLA-2-beta (113 aa).

A run of 2 repeats spans residues 15 to 17 (EWK) and 18 to 20 (EWK). The tract at residues 15 to 20 (EWKEWK) is 2 X 3 AA tandem repeats of E-W-K.

It to the propeptide regions of cysteine proteases.

Not known, expressed in activated T-cell. In Mus musculus (Mouse), this protein is Protein CTLA-2-beta (Ctla2b).